The primary structure comprises 90 residues: Probable Fe(2+)-trafficking protein (90 aa).

It belongs to the Fe(2+)-trafficking protein family.

Functionally, could be a mediator in iron transactions between iron acquisition and iron-requiring processes, such as synthesis and/or repair of Fe-S clusters in biosynthetic enzymes. This Hydrogenovibrio crunogenus (strain DSM 25203 / XCL-2) (Thiomicrospira crunogena) protein is Probable Fe(2+)-trafficking protein.